A 386-amino-acid polypeptide reads, in one-letter code: Prostacyclin receptor (386 aa).

The Extracellular portion of the chain corresponds to 1–16 (MADSCRNLTYVRGSVG). 2 disulfide bridges follow: C5–C165 and C92–C170. N7 is a glycosylation site (N-linked (GlcNAc...) asparagine). Residues 17–38 (PATSTLMFVAGVVGNGLALGIL) form a helical membrane-spanning segment. The Cytoplasmic portion of the chain corresponds to 39-51 (SARRPARPSAFAV). Residues 52 to 76 (LVTGLAATDLLGTSFLSPAVFVAYA) traverse the membrane as a helical segment. The Extracellular portion of the chain corresponds to 77–94 (RNSSLLGLARGGPALCDA). A helical transmembrane segment spans residues 95-115 (FAFAMTFFGLASMLILFAMAV). Residues 116–134 (ERCLALSHPYLYAQLDGPR) are Cytoplasmic-facing. Residues 135 to 158 (CARLALPAIYAFCVLFCALPLLGL) form a helical membrane-spanning segment. Residues 159–181 (GQHQQYCPGSWCFLRMRWAQPGG) are Extracellular-facing. A helical transmembrane segment spans residues 182-208 (AAFSLAYAGLVALLVAAIFLCNGSVTL). Residues 209–235 (SLCRMYRQQKRHQGSLGPRPRTGEDEV) are Cytoplasmic-facing. Residues 236–260 (DHLILLALMTVVMAVCSLPLTIRCF) traverse the membrane as a helical segment. The Extracellular segment spans residues 261–274 (TQAVAPDSSSEMGD). A helical membrane pass occupies residues 275-295 (LLAFRFYAFNPILDPWVFILF). The Cytoplasmic portion of the chain corresponds to 296-386 (RKAVFQRLKL…AEASVACSLC (91 aa)). The disordered stretch occupies residues 322 to 376 (PLSQLASGRRDPRAPSAPVGKEGSCVPLSAWGEGQVEPLPPTQQSSGSAVGTSSK). Residues 363–376 (TQQSSGSAVGTSSK) are compositionally biased toward polar residues. At C383 the chain carries Cysteine methyl ester. C383 is lipidated: S-farnesyl cysteine. The propeptide at 384–386 (SLC) is removed in mature form.

The protein belongs to the G-protein coupled receptor 1 family. Interacts (non-isoprenylated C-terminus) with PDZK1. In terms of processing, isoprenylation does not influence ligand binding but is required for efficient coupling to the effectors adenylyl cyclase and phospholipase C.

It localises to the cell membrane. Functionally, receptor for prostacyclin (prostaglandin I2 or PGI2). The activity of this receptor is mediated by G(s) proteins which activate adenylate cyclase. The polypeptide is Prostacyclin receptor (PTGIR) (Homo sapiens (Human)).